The chain runs to 544 residues: Cytochrome P450 monooxygenase verL (544 aa).

A helical transmembrane segment spans residues 3–23 (VALFPILPIGCLLIYIIFKLW). Residue C446 participates in heme binding. A disordered region spans residues 520 to 544 (QEKGIDGWKGKKESSSEENRGVSSR).

It belongs to the cytochrome P450 family. Heme serves as cofactor.

The protein resides in the membrane. Its pathway is mycotoxin biosynthesis. Functionally, cytochrome P450 monooxygenase; part of the gene cluster that mediates the biosynthesis of 11'-deoxyverticillin A, one of the dimeric epipolythiodioxopiperazines (ETPs) from the verticillin family that act as mycotoxins. 11'-deoxyverticillin A is required for normal conidiation. The nonribosomal peptide synthetase verP is speculated to be responsible for condensation of amino acids to form the carbon skeleton of verticillin, whereas the cluster-specific tailoring enzymes are involved in further modifications leading to the production of 11'-deoxyverticillin A. This chain is Cytochrome P450 monooxygenase verL, found in Clonostachys rogersoniana.